We begin with the raw amino-acid sequence, 285 residues long: Bifunctional protein FolD (285 aa).

NADP(+) is bound by residues 165 to 167 (GRS) and serine 190.

The protein belongs to the tetrahydrofolate dehydrogenase/cyclohydrolase family. In terms of assembly, homodimer.

It catalyses the reaction (6R)-5,10-methylene-5,6,7,8-tetrahydrofolate + NADP(+) = (6R)-5,10-methenyltetrahydrofolate + NADPH. It carries out the reaction (6R)-5,10-methenyltetrahydrofolate + H2O = (6R)-10-formyltetrahydrofolate + H(+). It participates in one-carbon metabolism; tetrahydrofolate interconversion. In terms of biological role, catalyzes the oxidation of 5,10-methylenetetrahydrofolate to 5,10-methenyltetrahydrofolate and then the hydrolysis of 5,10-methenyltetrahydrofolate to 10-formyltetrahydrofolate. This chain is Bifunctional protein FolD, found in Staphylococcus saprophyticus subsp. saprophyticus (strain ATCC 15305 / DSM 20229 / NCIMB 8711 / NCTC 7292 / S-41).